The sequence spans 169 residues: Der GTPase-activating protein YihI (169 aa).

Disordered stretches follow at residues 1 to 99 (MKPS…QAEL) and 146 to 169 (SYDD…LRGN). Over residues 10-19 (SKGHAKARRK) the composition is skewed to basic residues. Residues 20 to 30 (TREELDQEARD) show a composition bias toward basic and acidic residues. Basic residues predominate over residues 31–40 (RKRQKKRRGH). The segment covering 49–58 (GNTTSGSKGQ) has biased composition (polar residues). Over residues 147–159 (YDDDEEEEEDEKQ) the composition is skewed to acidic residues. The span at 160-169 (EDMMRLLRGN) shows a compositional bias: basic and acidic residues.

This sequence belongs to the YihI family. Interacts with Der.

A GTPase-activating protein (GAP) that modifies Der/EngA GTPase function. May play a role in ribosome biogenesis. The sequence is that of Der GTPase-activating protein YihI from Escherichia coli O45:K1 (strain S88 / ExPEC).